The primary structure comprises 276 residues: Undecaprenyl-diphosphatase (276 aa).

Helical transmembrane passes span 43-63, 85-105, 109-129, 183-203, 218-238, and 254-274; these read RAMA…VWEF, LNLL…ADTI, LFNA…MLWA, AATE…AVYS, VFAI…RGLL, and IAFG…WASA.

This sequence belongs to the UppP family.

It localises to the cell inner membrane. The catalysed reaction is di-trans,octa-cis-undecaprenyl diphosphate + H2O = di-trans,octa-cis-undecaprenyl phosphate + phosphate + H(+). Catalyzes the dephosphorylation of undecaprenyl diphosphate (UPP). Confers resistance to bacitracin. This Pseudomonas syringae pv. syringae (strain B728a) protein is Undecaprenyl-diphosphatase.